The chain runs to 433 residues: ATP-dependent protease ATPase subunit HslU (433 aa).

ATP-binding positions include isoleucine 18, 60–65, aspartate 246, glutamate 311, and arginine 383; that span reads GVGKTE.

This sequence belongs to the ClpX chaperone family. HslU subfamily. A double ring-shaped homohexamer of HslV is capped on each side by a ring-shaped HslU homohexamer. The assembly of the HslU/HslV complex is dependent on binding of ATP.

It localises to the cytoplasm. Its function is as follows. ATPase subunit of a proteasome-like degradation complex; this subunit has chaperone activity. The binding of ATP and its subsequent hydrolysis by HslU are essential for unfolding of protein substrates subsequently hydrolyzed by HslV. HslU recognizes the N-terminal part of its protein substrates and unfolds these before they are guided to HslV for hydrolysis. This chain is ATP-dependent protease ATPase subunit HslU, found in Cereibacter sphaeroides (strain ATCC 17025 / ATH 2.4.3) (Rhodobacter sphaeroides).